A 59-amino-acid polypeptide reads, in one-letter code: Small ribosomal subunit protein bS21 (59 aa).

The segment at lysine 40–arginine 59 is disordered. Over residues valine 43–arginine 59 the composition is skewed to basic residues.

It belongs to the bacterial ribosomal protein bS21 family.

The sequence is that of Small ribosomal subunit protein bS21 from Desulforamulus reducens (strain ATCC BAA-1160 / DSM 100696 / MI-1) (Desulfotomaculum reducens).